The sequence spans 144 residues: Large ribosomal subunit protein uL16 (144 aa).

The protein belongs to the universal ribosomal protein uL16 family. In terms of assembly, part of the 50S ribosomal subunit.

Binds 23S rRNA and is also seen to make contacts with the A and possibly P site tRNAs. The polypeptide is Large ribosomal subunit protein uL16 (Bacillus cytotoxicus (strain DSM 22905 / CIP 110041 / 391-98 / NVH 391-98)).